We begin with the raw amino-acid sequence, 287 residues long: Protein UL24 homolog (287 aa).

2 disordered regions span residues 1 to 33 (MARRRKEVQRGESRSHRSRTRSKTAHHRKFSRR) and 254 to 287 (RVGKESATKPASYSTSTEESKNLSEPCFDPDSNL). Basic residues predominate over residues 16-33 (HRSRTRSKTAHHRKFSRR).

The protein belongs to the herpesviridae UL24 family.

It is found in the virion. The protein localises to the host cytoplasm. Its subcellular location is the host nucleus. It localises to the host nucleolus. The protein resides in the host Golgi apparatus. Functionally, may participate in nuclear egress of viral particles. Plays a role in the dispersal of several host nucleolar proteins including NCL/nucleolin and NPM1. Since deletion of host NCL/nucleolin negatively impact on nuclear egress, UL24 supposedly acts on this process through its effect on host nucleoli. In Infectious laryngotracheitis virus (strain Thorne V882) (ILTV), this protein is Protein UL24 homolog.